Consider the following 295-residue polypeptide: Nucleotide-binding protein PEPE_0450 (295 aa).

ATP is bound at residue 12–19 (GMSGAGKT). 62-65 (DLRS) provides a ligand contact to GTP.

This sequence belongs to the RapZ-like family.

Displays ATPase and GTPase activities. The polypeptide is Nucleotide-binding protein PEPE_0450 (Pediococcus pentosaceus (strain ATCC 25745 / CCUG 21536 / LMG 10740 / 183-1w)).